A 229-amino-acid chain; its full sequence is Octanoyltransferase (229 aa).

Residues 47-225 enclose the BPL/LPL catalytic domain; the sequence is PSSPEAVWIL…SLAARFHLAW (179 aa). Residues 89-96, 156-158, and 169-171 contribute to the substrate site; these read RGGEVTHH, AIG, and GLA. Cysteine 187 serves as the catalytic Acyl-thioester intermediate.

The protein belongs to the LipB family.

It is found in the cytoplasm. It carries out the reaction octanoyl-[ACP] + L-lysyl-[protein] = N(6)-octanoyl-L-lysyl-[protein] + holo-[ACP] + H(+). Its pathway is protein modification; protein lipoylation via endogenous pathway; protein N(6)-(lipoyl)lysine from octanoyl-[acyl-carrier-protein]: step 1/2. Catalyzes the transfer of endogenously produced octanoic acid from octanoyl-acyl-carrier-protein onto the lipoyl domains of lipoate-dependent enzymes. Lipoyl-ACP can also act as a substrate although octanoyl-ACP is likely to be the physiological substrate. The polypeptide is Octanoyltransferase (Synechococcus sp. (strain CC9902)).